The sequence spans 278 residues: Troponin T, slow skeletal muscle (278 aa).

A compositionally biased stretch (acidic residues) spans 1-37 (MSDTEEQEYEEEQPEEEAAEEEEEAPEEPEPVAEPEE). 2 disordered regions span residues 1–63 (MSDT…RVDF) and 105–153 (RRRS…KKKV). Serine 2 is modified (phosphoserine; by CK2). Over residues 43–55 (SRPVVPPLIPPKI) the composition is skewed to pro residues. Residues 105–149 (RRRSERAEQQRFRTEKERERQAKLAEEKMRKEEEEAKKRAEDDAK) show a composition bias toward basic and acidic residues.

This sequence belongs to the troponin T family. Interacts with TPM3.

Functionally, troponin T is the tropomyosin-binding subunit of troponin, the thin filament regulatory complex which confers calcium-sensitivity to striated muscle actomyosin ATPase activity. This is Troponin T, slow skeletal muscle (TNNT1) from Homo sapiens (Human).